The chain runs to 1638 residues: Chromatin-remodeling ATPase INO80 (1638 aa).

Residues serine 41 to glutamate 93 form a disordered region. A phosphoserine mark is found at serine 47 and serine 48. Threonine 52 is modified (phosphothreonine). Residues glutamate 55–glutamine 65 show a composition bias toward basic and acidic residues. Serine 67 and serine 70 each carry phosphoserine. A coiled-coil region spans residues valine 136 to glutamine 161. Positions arginine 201 to glutamate 259 are disordered. Residues proline 212 to arginine 222 show a composition bias toward basic residues. Phosphoserine is present on residues serine 227 and serine 230. Over residues asparagine 250–glutamate 259 the composition is skewed to acidic residues. The DBINO domain maps to isoleucine 313–glutamine 438. The segment at lysine 499–proline 528 is disordered. Residues glutamate 502–valine 511 are compositionally biased toward acidic residues. Positions glutamate 512–proline 526 are enriched in basic and acidic residues. The Helicase ATP-binding domain maps to alanine 547–threonine 718. Aspartate 560 to threonine 567 is a binding site for ATP. The 156-residue stretch at valine 1160–lysine 1315 folds into the Helicase C-terminal domain. Disordered regions lie at residues glutamine 1335–methionine 1364 and phenylalanine 1463–glutamate 1638. Polar residues predominate over residues lysine 1338–glutamine 1350. Positions methionine 1473–glycine 1495 are enriched in basic residues. Composition is skewed to low complexity over residues threonine 1505–serine 1534 and serine 1618–proline 1627.

The protein belongs to the SNF2/RAD54 helicase family. Component of the chromatin remodeling Ino80 complex.

The protein resides in the nucleus. The enzyme catalyses ATP + H2O = ADP + phosphate + H(+). Functionally, ATPase component of the chromatin remodeling INO80 complex which is involved in transcriptional regulation, DNA replication and DNA repair. Binds DNA. As part of the INO80 complex, remodels chromatin by shifting nucleosomes. In Drosophila melanogaster (Fruit fly), this protein is Chromatin-remodeling ATPase INO80.